We begin with the raw amino-acid sequence, 83 residues long: Mitotic-spindle organizing protein 1 (83 aa).

The protein belongs to the MOZART1 family. Part of the gamma-tubulin complex.

It is found in the cytoplasm. Its subcellular location is the cytoskeleton. The protein localises to the microtubule organizing center. The protein resides in the spindle pole body. Its function is as follows. Required for gamma-tubulin complex recruitment to the microtubule organizing center (MTOC). The protein is Mitotic-spindle organizing protein 1 of Botryotinia fuckeliana (strain B05.10) (Noble rot fungus).